We begin with the raw amino-acid sequence, 238 residues long: tRNA (guanine-N(7)-)-methyltransferase (238 aa).

Glu68, Glu93, Asp120, and Asp143 together coordinate S-adenosyl-L-methionine. Residue Asp143 is part of the active site. Residues Lys147, Asp179, and 216-219 each bind substrate; that span reads TKFE.

This sequence belongs to the class I-like SAM-binding methyltransferase superfamily. TrmB family.

The catalysed reaction is guanosine(46) in tRNA + S-adenosyl-L-methionine = N(7)-methylguanosine(46) in tRNA + S-adenosyl-L-homocysteine. Its pathway is tRNA modification; N(7)-methylguanine-tRNA biosynthesis. Catalyzes the formation of N(7)-methylguanine at position 46 (m7G46) in tRNA. The chain is tRNA (guanine-N(7)-)-methyltransferase from Shewanella woodyi (strain ATCC 51908 / MS32).